The following is a 790-amino-acid chain: Endonuclease MutS2 (790 aa).

334–341 (GPNTGGKT) provides a ligand contact to ATP. In terms of domain architecture, Smr spans 715–790 (IDVRGQNLEE…GMGVTIVHLK (76 aa)).

Belongs to the DNA mismatch repair MutS family. MutS2 subfamily. In terms of assembly, homodimer. Binds to stalled ribosomes, contacting rRNA.

In terms of biological role, endonuclease that is involved in the suppression of homologous recombination and thus may have a key role in the control of bacterial genetic diversity. Functionally, acts as a ribosome collision sensor, splitting the ribosome into its 2 subunits. Detects stalled/collided 70S ribosomes which it binds and splits by an ATP-hydrolysis driven conformational change. Acts upstream of the ribosome quality control system (RQC), a ribosome-associated complex that mediates the extraction of incompletely synthesized nascent chains from stalled ribosomes and their subsequent degradation. Probably generates substrates for RQC. The sequence is that of Endonuclease MutS2 from Alkaliphilus oremlandii (strain OhILAs) (Clostridium oremlandii (strain OhILAs)).